A 112-amino-acid chain; its full sequence is uncharacterized protein (112 aa).

This is an uncharacterized protein from Sulfolobus islandicus filamentous virus (isolate Iceland/Hveragerdi) (SIFV).